An 817-amino-acid chain; its full sequence is Rho GTPase-activating protein gacII (817 aa).

In terms of domain architecture, Rho-GAP spans 20 to 204; sequence TTIVKIGTPK…TLIEEFQYIS (185 aa). In terms of domain architecture, SH3 spans 238 to 298; sequence EDYLIAKANT…SQTYVDIIDI (61 aa). Low complexity predominate over residues 318 to 339; the sequence is ASTILHTPPTSSSSSSSSSSSS. Disordered stretches follow at residues 318–638, 691–771, and 783–817; these read ASTI…NIPV, LGGQ…QQQQ, and LPPQ…FNKN. A compositionally biased stretch (polar residues) spans 340–358; that stretch reads ILLTDNQPKLCSSTPRINN. Residues 359–391 are compositionally biased toward low complexity; that stretch reads SPSSFSPSLSSTTPQLLVQQSPRQSPRQIPSIS. The span at 396–438 shows a compositional bias: polar residues; the sequence is PNNTNQPSFGHGTLQRTSTGYFSSKPLSISQPINMSKPTNMSP. The span at 461-471 shows a compositional bias: pro residues; the sequence is PPLPTKPPPLT. Positions 472-498 are enriched in low complexity; sequence IPSSSSLPTTPIKQQPQQPIQQPLTPQ. The segment covering 509-532 has biased composition (polar residues); sequence LSSSVNTANTGNCANILSPNSDRY. 3 stretches are compositionally biased toward low complexity: residues 534-568, 577-587, and 607-624; these read SSRS…SSTS, KSKSSKNSPSK, and ITTT…TIAT. Pro residues predominate over residues 625–635; sequence TPPPPSKPLPN. Residues 705–722 show a composition bias toward polar residues; sequence KSQSSYLDNNNLPSRNTN. Residues 725–734 show a composition bias toward pro residues; the sequence is NLPPRPPPLN. Low complexity-rich tracts occupy residues 735-744 and 752-771; these read IPQQQQQYKP and QSPQ…QQQQ. Residues 785–803 are compositionally biased toward polar residues; the sequence is PQNTNLSGKNLQRSSTSML. The span at 807 to 817 shows a compositional bias: pro residues; that stretch reads LPPPPFSFNKN.

The protein localises to the cytoplasm. Functionally, rho GTPase-activating protein involved in the signal transduction pathway. The sequence is that of Rho GTPase-activating protein gacII (gacII) from Dictyostelium discoideum (Social amoeba).